A 215-amino-acid polypeptide reads, in one-letter code: HTH-type transcriptional regulator for conjugative element R391 (215 aa).

The 54-residue stretch at 8-61 folds into the HTH cro/C1-type domain; that stretch reads LNHALQLTGVTQSELARRIGIKQQSISQICSGKSARSRYTMQIAEALRVNAHWL. The segment at residues 19–38 is a DNA-binding region (H-T-H motif); it reads QSELARRIGIKQQSISQICS.

May control the expression of the integrase and inhibit excision of the mobile element R391, and regulate the expression of other genes as well. In Providencia rettgeri, this protein is HTH-type transcriptional regulator for conjugative element R391.